The sequence spans 405 residues: Lariat debranching enzyme (405 aa).

4 residues coordinate a divalent metal cation: C11, H13, D40, and N85. The lariat recognition loop stretch occupies residues 125–159; that stretch reads SGIWKEWDFNKQRPDWNDLENNNWKANIRNLYHVR. The a divalent metal cation site is built by H179, H231, and H233. Positions 242–277 are disordered; it reads HNKRSHEPPNKSTSKTKKNNNEIDLDLSSDEDERSG. The segment covering 264–274 has biased composition (acidic residues); that stretch reads IDLDLSSDEDE. S269 is subject to Phosphoserine.

The protein belongs to the lariat debranching enzyme family. Requires Fe(2+) as cofactor. The cofactor is Zn(2+). It depends on Mn(2+) as a cofactor.

It localises to the nucleus. It is found in the cytoplasm. With respect to regulation, active in presence of diverse metals including Fe(2+), Zn(2+) and Mn(2+). Binds two metal cations in two adjacent alpha and beta metal-binding pockets. The activity is the highest with Fe(2+) bound to the 2 metal-binding sites. Activity is low with Zn(2+) and Mn(2+). Cleaves the 2'-5' phosphodiester linkage at the branch point of lariat intron pre-mRNAs after splicing and converts them into linear molecules that are subsequently degraded, thereby facilitating ribonucleotide turnover. It also participates in Ty1 retrovirus-like transposition via an RNA lariat intermediate in cDNA synthesis. The protein is Lariat debranching enzyme (DBR1) of Saccharomyces cerevisiae (strain ATCC 204508 / S288c) (Baker's yeast).